The chain runs to 232 residues: T-cell surface glycoprotein CD1b-3 (232 aa).

Topologically, residues 1–201 (GLQEFQFEYP…LYWGHPMYIG (201 aa)) are extracellular. Cystine bridges form between cysteine 19-cysteine 83, cysteine 48-cysteine 62, and cysteine 123-cysteine 178. N-linked (GlcNAc...) asparagine glycosylation is present at asparagine 45. One can recognise an Ig-like domain in the interval 84 to 194 (PRYLLGVLDA…LGDQDIILYW (111 aa)). Residues 202-222 (LIFVAIIVPSLILLICLALWF) traverse the membrane as a helical segment. Residues 223–232 (WRRWSYQTVL) lie on the Cytoplasmic side of the membrane.

In terms of assembly, heterodimer with B2M (beta-2-microglobulin). Interacts with saposin C.

It is found in the cell membrane. The protein resides in the endosome membrane. The protein localises to the lysosome membrane. In terms of biological role, antigen-presenting protein that binds self and non-self lipid and glycolipid antigens and presents them to T-cell receptors on natural killer T-cells. In Ovis aries (Sheep), this protein is T-cell surface glycoprotein CD1b-3.